Consider the following 502-residue polypeptide: Lysine--tRNA ligase (502 aa).

Mg(2+)-binding residues include glutamate 411 and glutamate 418.

It belongs to the class-II aminoacyl-tRNA synthetase family. In terms of assembly, homodimer. It depends on Mg(2+) as a cofactor.

The protein resides in the cytoplasm. It carries out the reaction tRNA(Lys) + L-lysine + ATP = L-lysyl-tRNA(Lys) + AMP + diphosphate. This is Lysine--tRNA ligase from Clostridium tetani (strain Massachusetts / E88).